Here is a 398-residue protein sequence, read N- to C-terminus: ATP-dependent RNA helicase eIF4A (398 aa).

The Q motif motif lies at Asp-25 to Gln-53. The Helicase ATP-binding domain occupies Ile-56–Ile-226. Residue Ala-69–Thr-76 coordinates ATP. The DEAD box signature appears at Asp-174–Asp-177. The Helicase C-terminal domain maps to Gly-237–Ile-398.

Belongs to the DEAD box helicase family. eIF4A subfamily. In terms of assembly, component of the eIF4F complex, which composition varies with external and internal environmental conditions. It is composed of at least eIF4A, eIF4E and eIF4G.

It is found in the cytoplasm. The catalysed reaction is ATP + H2O = ADP + phosphate + H(+). ATP-dependent RNA helicase which is a subunit of the eIF4F complex involved in cap recognition and is required for mRNA binding to ribosome. In the current model of translation initiation, eIF4A unwinds RNA secondary structures in the 5'-UTR of mRNAs which is necessary to allow efficient binding of the small ribosomal subunit, and subsequent scanning for the initiator codon. This chain is ATP-dependent RNA helicase eIF4A (tif1), found in Aspergillus clavatus (strain ATCC 1007 / CBS 513.65 / DSM 816 / NCTC 3887 / NRRL 1 / QM 1276 / 107).